We begin with the raw amino-acid sequence, 74 residues long: Protein kish-B (74 aa).

A signal peptide spans 1 to 22 (MTNVYSLDGILVFGLLFVCTCA). Topologically, residues 23 to 52 (YFKKVPRLKTWLLSEKKGVWGVFYKAAVIG) are extracellular. A helical membrane pass occupies residues 53 to 73 (TRLHAAVAIACVVMAFYVLFI). Position 74 (lysine 74) is a topological domain, cytoplasmic.

It belongs to the KISH family.

The protein localises to the golgi apparatus membrane. In terms of biological role, involved in the early part of the secretory pathway. The polypeptide is Protein kish-B (TMEM167B) (Homo sapiens (Human)).